A 142-amino-acid polypeptide reads, in one-letter code: Large ribosomal subunit protein uL11 (142 aa).

It belongs to the universal ribosomal protein uL11 family. As to quaternary structure, part of the ribosomal stalk of the 50S ribosomal subunit. Interacts with L10 and the large rRNA to form the base of the stalk. L10 forms an elongated spine to which L12 dimers bind in a sequential fashion forming a multimeric L10(L12)X complex. In terms of processing, one or more lysine residues are methylated.

Forms part of the ribosomal stalk which helps the ribosome interact with GTP-bound translation factors. This Alcanivorax borkumensis (strain ATCC 700651 / DSM 11573 / NCIMB 13689 / SK2) protein is Large ribosomal subunit protein uL11.